Reading from the N-terminus, the 180-residue chain is MKTIYFVAGLLIMLVQGSWQHALQDTEENPRSFPASQTEAHEDPDEMNEDKRHSQGTFTSDYSKYLDSRRAQDFVQWLMNTKRNRNNIAKRHDEFERHAEGTFTSDVSSYLEGQAAKEFIAWLVKGRGRRDFPEEVAIAEELGRRHADGSFSDEMSTILDNLATRDFINWLIQTKITDKK.

An N-terminal signal peptide occupies residues 1–20 (MKTIYFVAGLLIMLVQGSWQ). The segment at 25–58 (DTEENPRSFPASQTEAHEDPDEMNEDKRHSQGTF) is disordered. S54 carries the post-translational modification Phosphoserine. Residues 84–89 (NRNNIA) constitute a propeptide that is removed on maturation. Residues S105 and S108 each carry the phosphoserine modification. At R127 the chain carries Arginine amide. Residues 131–145 (DFPEEVAIAEELGRR) constitute a propeptide that is removed on maturation. A phosphoserine mark is found at S150 and S152.

It belongs to the glucagon family. In terms of processing, proglucagon is post-translationally processed in a tissue-specific manner in pancreatic A cells and intestinal L cells. In pancreatic A cells, the major bioactive hormone is glucagon cleaved by PCSK2/PC2. In the intestinal L cells PCSK1/PC1 liberates GLP-1, GLP-2, glicentin and oxyntomodulin. GLP-1 is further N-terminally truncated by post-translational processing in the intestinal L cells resulting in GLP-1(7-37) GLP-1-(7-36)amide. The C-terminal amidation is neither important for the metabolism of GLP-1 nor for its effects on the endocrine pancreas. In terms of tissue distribution, secreted in the A cells of the islets of Langerhans. Secreted in the A cells of the islets of Langerhans. Secreted from enteroendocrine L cells throughout the gastrointestinal tract. Also secreted in selected neurons in the brain. As to expression, secreted from enteroendocrine cells throughout the gastrointestinal tract. Also secreted in selected neurons in the brain. In terms of tissue distribution, secreted from enteroendocrine cells throughout the gastrointestinal tract.

Its subcellular location is the secreted. Plays a key role in glucose metabolism and homeostasis. Regulates blood glucose by increasing gluconeogenesis and decreasing glycolysis. A counterregulatory hormone of insulin, raises plasma glucose levels in response to insulin-induced hypoglycemia. Plays an important role in initiating and maintaining hyperglycemic conditions in diabetes. In terms of biological role, potent stimulator of glucose-dependent insulin release. Also stimulates insulin release in response to IL6. Plays important roles on gastric motility and the suppression of plasma glucagon levels. May be involved in the suppression of satiety and stimulation of glucose disposal in peripheral tissues, independent of the actions of insulin. Has growth-promoting activities on intestinal epithelium. May also regulate the hypothalamic pituitary axis (HPA) via effects on LH, TSH, CRH, oxytocin, and vasopressin secretion. Increases islet mass through stimulation of islet neogenesis and pancreatic beta cell proliferation. Inhibits beta cell apoptosis. Functionally, stimulates intestinal growth and up-regulates villus height in the small intestine, concomitant with increased crypt cell proliferation and decreased enterocyte apoptosis. The gastrointestinal tract, from the stomach to the colon is the principal target for GLP-2 action. Plays a key role in nutrient homeostasis, enhancing nutrient assimilation through enhanced gastrointestinal function, as well as increasing nutrient disposal. Stimulates intestinal glucose transport and decreases mucosal permeability. Its function is as follows. Significantly reduces food intake. Inhibits gastric emptying in humans. Suppression of gastric emptying may lead to increased gastric distension, which may contribute to satiety by causing a sensation of fullness. May modulate gastric acid secretion and the gastro-pyloro-duodenal activity. May play an important role in intestinal mucosal growth in the early period of life. The protein is Pro-glucagon (Gcg) of Mus musculus (Mouse).